The sequence spans 139 residues: Bilirubin-inducible fluorescent protein UnaG (139 aa).

Residues N57, T61, S80, R112, and 132-134 (RSY) each bind (4Z,15Z)-bilirubin IXalpha.

This sequence belongs to the calycin superfamily. Fatty-acid binding protein (FABP) family. As to quaternary structure, monomer. Detected in small-diameter muscle fibers from the white muscle layer from juvenile animals (glass eels) (at protein level). Detected in small-diameter muscle fibers from juvenile animals (glass eels).

The protein resides in the cytoplasm. Beta-barrel protein that binds unconjugated bilirubin with high affinity. Excitation of the bilirubin-bound protein gives rise to green fluorescence, both under normoxia and hypoxia. The apoprotein is not fluorescent. Does not emit fluorescence in the presence of ditauro-bilirubin, urobilin or biliverdin. The polypeptide is Bilirubin-inducible fluorescent protein UnaG (Anguilla japonica (Japanese eel)).